A 329-amino-acid chain; its full sequence is Nuclear pore complex protein NUP35 (329 aa).

2 disordered regions span residues 48–105 (NFGG…GKGK) and 123–167 (VSGS…PPRE). The span at 123 to 139 (VSGSPSWWSQSKAGSST) shows a compositional bias: polar residues. The RRM Nup35-type domain maps to 183–264 (LDEEEWVTVY…KPVDPIQKQA (82 aa)). A disordered region spans residues 271 to 315 (NQGFMPLPPPSSTRNTARPLSRPQYLQNGSAFSPQPSGGAMASPS). Positions 282–306 (STRNTARPLSRPQYLQNGSAFSPQP) are enriched in polar residues.

This sequence belongs to the Nup35 family. As to quaternary structure, part of the nuclear pore complex (NPC). The NPC has an eight-fold symmetrical structure comprising a central transport channel and two rings, the cytoplasmic and nuclear rings, to which eight filaments are attached. The cytoplasmic filaments have loose ends, while the nuclear filaments are joined in a distal ring, forming a nuclear basket. NPCs are highly dynamic in configuration and composition, and can be devided in 3 subcomplexes, the NUP62 subcomplex, the NUP107-160 subcomplex and the NUP93 subcomplex, containing approximately 30 different nucleoporin proteins.

It is found in the nucleus. The protein resides in the nuclear pore complex. This is Nuclear pore complex protein NUP35 from Arabidopsis thaliana (Mouse-ear cress).